The following is a 348-amino-acid chain: Mannonate dehydratase (348 aa).

Belongs to the mannonate dehydratase family. Fe(2+) is required as a cofactor. Requires Mn(2+) as cofactor.

It catalyses the reaction D-mannonate = 2-dehydro-3-deoxy-D-gluconate + H2O. The protein operates within carbohydrate metabolism; pentose and glucuronate interconversion. Catalyzes the dehydration of D-mannonate. The polypeptide is Mannonate dehydratase (Streptococcus agalactiae serotype V (strain ATCC BAA-611 / 2603 V/R)).